Consider the following 539-residue polypeptide: Sorting nexin-27 (539 aa).

A disordered region spans residues 1-40; that stretch reads MADEDGEGIHPSTPHRNGGGGGGSGLHCAGNGGGGGGGPR. Residues 17 to 39 show a composition bias toward gly residues; that stretch reads NGGGGGGSGLHCAGNGGGGGGGP. Residues 41–134 form the PDZ domain; sequence VVRIVKSESG…ELILTVLSVP (94 aa). 2 positions are modified to phosphoserine: S49 and S60. Residues 159–267 enclose the PX domain; sequence QAVPISVPTY…EFLSESDENY (109 aa). Residues 271-360 enclose the Ras-associating domain; it reads SDVELRVALP…TCLTIRKWLF (90 aa). An FERM-like region F1 region spans residues 271–360; the sequence is SDVELRVALP…TCLTIRKWLF (90 aa). The segment at 371-419 is FERM-like region F2; that stretch reads NDLAVTYFFHQAVDDVKKGYIKAEEKSYQLQKLYEQRKMVMYLNMLRTC. The FERM-like region F3 stretch occupies residues 423 to 523; sequence NEIIFPHCAC…RVFCELKWRK (101 aa).

In terms of assembly, core component of the SNX27-retromer, a multiprotein complex composed of SNX27, the WASH complex and the retromer complex. Interacts (via PDZ domain) with a number of target transmembrane proteins (via PDZ-binding motif): ABCC4, ADRB2, ARHGEF7, GRIA1, GRIA2, GRIN1, GRIN2A GRIN2C, KCNJ6, KCNJ9 and SLC2A1/GLUT1. Interacts (via the FERM-like regions) with the WASH complex. Interacts with SNX1. Interacts with CYTIP. Interacts with DGKZ. Interacts with MCC. Interacts (via PDZ domains) with SLC9A3; directs SLC9A3 membrane insertion from early endosomes to the plasma membrane. In terms of tissue distribution, isoform 1 is predominantly expressed in the testis, whereas isoform 2 is predominant in various brain regions, including, neocortex, paleocortex, striatum, hippocampus, cerebellum and brain stem. Expressed in cells of hematopoietic origin.

Its subcellular location is the early endosome membrane. It is found in the cytoplasm. It localises to the cytosol. Functionally, involved in the retrograde transport from endosome to plasma membrane, a trafficking pathway that promotes the recycling of internalized transmembrane proteins. Following internalization, endocytosed transmembrane proteins are delivered to early endosomes and recycled to the plasma membrane instead of being degraded in lysosomes. SNX27 specifically binds and directs sorting of a subset of transmembrane proteins containing a PDZ-binding motif at the C-terminus: following interaction with target transmembrane proteins, associates with the retromer complex, preventing entry into the lysosomal pathway, and promotes retromer-tubule based plasma membrane recycling. SNX27 also binds with the WASH complex. Interacts with membranes containing phosphatidylinositol-3-phosphate (PtdIns(3P)). May participate in establishment of natural killer cell polarity. Recruits CYTIP to early endosomes. The protein is Sorting nexin-27 (Snx27) of Rattus norvegicus (Rat).